The primary structure comprises 391 residues: Protein ABCI12, chloroplastic (391 aa).

A chloroplast-targeting transit peptide spans 1–63 (MNHSNLANPT…LAAKRVFIVR (63 aa)). The next 5 membrane-spanning stretches (helical) occupy residues 134–154 (ANLV…ILVL), 168–188 (LLSG…PPML), 229–249 (VGST…ICLA), 263–283 (FLFP…TLLL), and 370–390 (FASV…EYFL).

It is found in the plastid. Its subcellular location is the chloroplast. It localises to the membrane. The chain is Protein ABCI12, chloroplastic (ABCI12) from Arabidopsis thaliana (Mouse-ear cress).